The sequence spans 1077 residues: TSC22 domain family protein 1 (1077 aa).

Residues 1–98 (MHQPPESTAA…SQAQLQGQPL (98 aa)) are required for interaction with TGFBR1 and promotion of TGF-beta signaling. Disordered regions lie at residues 22-112 (MAHP…SGFQ), 125-283 (ISSN…VPSS), 458-492 (QTPT…SVGS), 842-874 (SSAA…GSLV), and 909-947 (QAIG…SDGS). Positions 58–70 (FPPPSLLQPPPPA) are enriched in pro residues. Over residues 84–96 (SLNLLSQAQLQGQ) the composition is skewed to low complexity. Residues 133–142 (EDTESYDDLD) show a composition bias toward acidic residues. A compositionally biased stretch (basic residues) spans 216–240 (HPHHLHHHHHPHHGHHLHHGHHHSS). The residue at position 263 (S263) is a Phosphoserine. Positions 471 to 489 (TSGSSVSSSVSTLSHYTES) are enriched in low complexity. Polar residues predominate over residues 852 to 874 (VPTNLVPPQNIAQPPATQNGSLV). Positions 933–947 (MSGDSGGMSAVSDGS) are enriched in low complexity. Residues 1010 to 1031 (LKEQIKELIEKNSQLEQENNLL) are leucine-zipper. The tract at residues 1042 to 1077 (QFQAQLQTGSPPATTQPQGTTQPPAQPASQGSGSTA) is disordered. Residues 1048–1077 (QTGSPPATTQPQGTTQPPAQPASQGSGSTA) are compositionally biased toward low complexity.

This sequence belongs to the TSC-22/Dip/Bun family. In terms of assembly, forms homodimers. Forms heterodimers. Component of a complex composed of TSC22D1 (via N-terminus), TGFBR1 and TGFBR2; the interaction between TSC22D1 and TGFBR1 is inhibited by SMAD7 and promoted by TGFB1. Interacts with SMAD7; the interaction requires TGF-beta and the interaction is inhibited by TGFBR1. Interacts with TPT1/fortilin; interaction results in the destabilization of TSC22D1 protein and prevents TSC22D1-mediated apoptosis. Interacts with SMAD4 (via N-terminus). Interacts with ACVRL1/ALK1, ACVR1/ALK2, BMPR1A/ALK3, ACVR1B/ALK4, BMPR1B/ALK6, ACVR2A/ACTRII, and BMPR2. Interacts with SMAD6. Interacts with TFE3; the interaction is enhanced in the presence of TGF-beta. Forms a heterodimer with TSC22D4/THG1. As to quaternary structure, forms a heterodimer with TSC22D4/THG1. Interacts with histone H1-2. Interacts with GNL3. Expressed in bone marrow cells (at protein level). Expressed in T-cells. Expressed in the brain. In terms of tissue distribution, expressed in the myoepithelial cells of the mammary gland ducts and alveoli, expression is consistent throughout pregnancy, lactation and involution (at protein level). Expressed in the cortex, medulla and papilla of the kidney. As to expression, expressed in the myoepithelial cells of the mammary gland, expression significantly increases in the secretory luminal epithelium of the mammary gland at the initiation of involution, with levels decreasing from day 3 of involution onwards (at protein level). Expressed in the cortex, medulla and papilla of the kidney.

Its subcellular location is the cytoplasm. It is found in the nucleus. It localises to the cell membrane. The protein resides in the mitochondrion. Its function is as follows. Transcriptional repressor. Acts on the C-type natriuretic peptide (CNP) promoter. Acts to promote CASP3-mediated apoptosis. Positively regulates TGF-beta signaling by interacting with SMAD7 which inhibits binding of SMAD7 to TGFBR1, preventing recruitment of SMURF ubiquitin ligases to TGFBR1 and inhibiting SMURF-mediated ubiquitination and degradation of TGFBR1. Contributes to enhancement of TGF-beta signaling by binding to and modulating the transcription activator activity of SMAD4. Promotes TGF-beta-induced transcription of COL1A2; via its interaction with TFE3 at E-boxes in the gene proximal promoter. Plays a role in the repression of hematopoietic precursor cell growth. Promotes IL2 deprivation-induced apoptosis in T-lymphocytes, via repression of TSC22D3/GILZ transcription and activation of the caspase cascade. Functionally, may act to negatively regulate TGFB3 signaling and thereby inhibit cell death in mammary gland cells. Positively regulates cell death in response to TGFB3 during mammary gland involution. This chain is TSC22 domain family protein 1, found in Mus musculus (Mouse).